A 437-amino-acid chain; its full sequence is Rhoptry apical surface protein 2 (437 aa).

One can recognise a C2 domain in the interval 45-179 (GCLGSLFFYL…PRINLSLHKL (135 aa)). Residues 230 to 338 (EGPLERLNAN…FIEKLRAYRE (109 aa)) form the PH domain. Residues 341–437 (STRVPSQKGA…SVVGDEEPQT (97 aa)) are disordered. Residues 375 to 384 (RKSGGKKSRR) are compositionally biased toward basic residues.

Interacts with RASP1. Interacts with RASP3.

It localises to the cytoplasmic vesicle. It is found in the secretory vesicle. The protein resides in the rhoptry membrane. In terms of biological role, essential for tachyzoite invasion of host cells by controlling rhoptry secretion. Binds to phosphatidic acid (PA) and phosphatidylinositol 4,5-bisphosphate (PIP2) lipids and thus, likely contributes to the assembly of the machinery that docks or primes the rhoptry to the parasite cell membrane prior to the fusion with the host cell membrane. This is Rhoptry apical surface protein 2 from Toxoplasma gondii (strain ATCC 50853 / GT1).